A 946-amino-acid polypeptide reads, in one-letter code: Alanine--tRNA ligase, cytoplasmic (946 aa).

Zn(2+) contacts are provided by His591, His595, Cys710, and His714.

It belongs to the class-II aminoacyl-tRNA synthetase family. As to quaternary structure, monomer. It depends on Zn(2+) as a cofactor.

The protein resides in the cytoplasm. The catalysed reaction is tRNA(Ala) + L-alanine + ATP = L-alanyl-tRNA(Ala) + AMP + diphosphate. Catalyzes the attachment of alanine to tRNA(Ala) in a two-step reaction: alanine is first activated by ATP to form Ala-AMP and then transferred to the acceptor end of tRNA(Ala). Also edits incorrectly charged tRNA(Ala) via its editing domain. In Dictyostelium discoideum (Social amoeba), this protein is Alanine--tRNA ligase, cytoplasmic (alaS).